A 1735-amino-acid polypeptide reads, in one-letter code: Inactive tyrosine-protein kinase PEAK1 (1735 aa).

2 disordered regions span residues 26–66 (LHQL…PPVA) and 111–145 (LSQK…KISN). Composition is skewed to polar residues over residues 111–121 (LSQKPLNNNSE) and 130–145 (DPQQ…KISN). S282 bears the Phosphoserine mark. 3 disordered regions span residues 324–410 (NSGV…SVKV), 491–514 (GRPK…LTPG), and 537–580 (SPRQ…SKTI). Over residues 325–336 (SGVSYGQGSVQS) the composition is skewed to low complexity. Over residues 337-365 (TISSDCTSPGSSFTEESRSETASSLSQKV) the composition is skewed to polar residues. The span at 367–378 (NGGISPGNPGNS) shows a compositional bias: low complexity. Residues 384–393 (TESNFESPPG) show a composition bias toward polar residues. Residues 498–509 (SSSTPNSPVTSP) show a composition bias toward low complexity. 3 positions are modified to phosphoserine: S537, S569, and S584. Over residues 566 to 580 (APTSPTATNISSKTI) the composition is skewed to polar residues. A phosphotyrosine mark is found at Y632 and Y638. Residue S645 is modified to Phosphoserine. At Y662 the chain carries Phosphotyrosine. Disordered stretches follow at residues 663-762 (EEIE…REKA), 800-919 (PDAD…AADA), and 1019-1097 (RNSE…SATY). Composition is skewed to polar residues over residues 704–735 (QEFN…QRPT), 745–757 (AQGS…SSNS), and 819–839 (LFTS…SPTA). Phosphoserine is present on residues S824 and S825. Over residues 847–863 (TKPVTSPPSKLVTSAQS) the composition is skewed to low complexity. Residues 864-873 (EPPPPFPPPR) show a composition bias toward pro residues. The segment covering 879-901 (YHASNLLQRHFTNWTKPTSPTRS) has biased composition (polar residues). S897 carries the post-translational modification Phosphoserine. Basic and acidic residues-rich tracts occupy residues 902–919 (TEAE…AADA) and 1037–1055 (ACSR…RDPR). Over residues 1076-1086 (EREEEKDDTLD) the composition is skewed to acidic residues. T1141 is modified (phosphothreonine). At Y1177 the chain carries Phosphotyrosine. A required for homodimerization region spans residues 1274-1300 (EVVGKLRSLHTDALKRLAVKCEDLFMA). Residues 1302 to 1664 (QKDQLRFGVD…LLWGPREDLF (363 aa)) form the Protein kinase domain. Phosphoserine is present on S1363. Positions 1394-1445 (WEDPDAPEKAEDGTEDSEEEGKAETLGGNPEPCSETEPSQKENQRVTNRKQR) are disordered. Residues 1659–1732 (PREDLFQIFT…DSLSYIVKIL (74 aa)) are required for homodimerization.

This sequence belongs to the protein kinase superfamily. Homodimer. Interacts with BCAR1 and CRK. Interacts with PRAG1. Interacts (when phosphorylated at Tyr-1177) with SHC1 (via PID domain). Found in a complex with PPP1CA, PPP1CC and SHC1. Interacts (when phosphorylated at Tyr-632) with tensin TNS3 (when phosphorylated on the SH2 domain); TNS3 also interacts with integrins ITGB1, ITGB3 and ITGB5 and mediates their association with PEAK1. In terms of processing, phosphorylated on tyrosine in a CSK-dependent manner in response to adhesion to fibronectin and to EGF stimulation. Phosphorylation at Tyr-662 by a Src family kinase controls subcellular localization to focal adhesion and focal adhesion dynamics. Phosphorylation at Tyr-1177 is essential for binding to SHC1. Phosphorylation at Tyr-632 promotes interaction with tensin TNS3.

Its subcellular location is the cytoplasm. It is found in the cytoskeleton. The protein localises to the cell junction. The protein resides in the focal adhesion. Functionally, probable catalytically inactive kinase. Scaffolding protein that regulates the cytoskeleton to control cell spreading and migration by modulating focal adhesion dynamics. Acts as a scaffold for mediating EGFR signaling. This is Inactive tyrosine-protein kinase PEAK1 (Peak1) from Mus musculus (Mouse).